A 156-amino-acid chain; its full sequence is Endoribonuclease YbeY (156 aa).

Zn(2+)-binding residues include His-122, His-126, and His-132.

The protein belongs to the endoribonuclease YbeY family. Zn(2+) is required as a cofactor.

It localises to the cytoplasm. Its function is as follows. Single strand-specific metallo-endoribonuclease involved in late-stage 70S ribosome quality control and in maturation of the 3' terminus of the 16S rRNA. The sequence is that of Endoribonuclease YbeY from Symbiobacterium thermophilum (strain DSM 24528 / JCM 14929 / IAM 14863 / T).